Reading from the N-terminus, the 90-residue chain is Gene 56 protein (90 aa).

One can recognise a Glutaredoxin domain in the interval 1–90 (MRTMFTPITI…DYYTASETGL (90 aa)). A disulfide bridge connects residues C16 and C19.

This Mycobacterium phage D29 (Mycobacteriophage D29) protein is Gene 56 protein (56).